Here is a 473-residue protein sequence, read N- to C-terminus: Uronate isomerase (473 aa).

It belongs to the metallo-dependent hydrolases superfamily. Uronate isomerase family.

The catalysed reaction is D-glucuronate = D-fructuronate. The enzyme catalyses aldehydo-D-galacturonate = keto-D-tagaturonate. Its pathway is carbohydrate metabolism; pentose and glucuronate interconversion. The sequence is that of Uronate isomerase from Bacillus licheniformis (strain ATCC 14580 / DSM 13 / JCM 2505 / CCUG 7422 / NBRC 12200 / NCIMB 9375 / NCTC 10341 / NRRL NRS-1264 / Gibson 46).